Here is an 882-residue protein sequence, read N- to C-terminus: Cutinase transcription factor 1 beta (882 aa).

Positions 1-20 are enriched in low complexity; the sequence is MNAETPEGSAAPPSPASTSA. The segment at 1 to 49 is disordered; it reads MNAETPEGSAAPPSPASTSAKTVTDKTNKKRASPSGDSEQPTKVTKRRA. Positions 53–81 form a DNA-binding region, zn(2)-C6 fungal-type; that stretch reads CVSCRARKVRCDVVEGAPCGNCRWDNVEC. Positions 117–148 are disordered; sequence NPMGMSTADLRRPSSGSAISTSSIDGPSSFLS. A compositionally biased stretch (low complexity) spans 130 to 139; sequence SSGSAISTSS.

It localises to the nucleus. The polypeptide is Cutinase transcription factor 1 beta (CTF1-BETA) (Fusarium vanettenii (Neocosmospora pisi)).